The following is a 195-amino-acid chain: Probable WRKY transcription factor 56 (195 aa).

Polar residues predominate over residues 1 to 10 (MEGVDNTNPM). 2 disordered regions span residues 1–20 (MEGV…ENNN) and 70–93 (EMGG…KGKG). Residues 108-173 (SDDDVLDDGY…YEGVHNHPCE (66 aa)) constitute a DNA-binding region (WRKY).

This sequence belongs to the WRKY group II-c family.

The protein localises to the nucleus. Functionally, transcription factor. Interacts specifically with the W box (5'-(T)TGAC[CT]-3'), a frequently occurring elicitor-responsive cis-acting element. The chain is Probable WRKY transcription factor 56 (WRKY56) from Arabidopsis thaliana (Mouse-ear cress).